Here is a 486-residue protein sequence, read N- to C-terminus: N-succinylglutamate 5-semialdehyde dehydrogenase (486 aa).

220–225 serves as a coordination point for NAD(+); sequence GSSRTG. Residues Glu-243 and Cys-277 contribute to the active site.

This sequence belongs to the aldehyde dehydrogenase family. AstD subfamily.

The catalysed reaction is N-succinyl-L-glutamate 5-semialdehyde + NAD(+) + H2O = N-succinyl-L-glutamate + NADH + 2 H(+). It participates in amino-acid degradation; L-arginine degradation via AST pathway; L-glutamate and succinate from L-arginine: step 4/5. Catalyzes the NAD-dependent reduction of succinylglutamate semialdehyde into succinylglutamate. This chain is N-succinylglutamate 5-semialdehyde dehydrogenase, found in Shewanella halifaxensis (strain HAW-EB4).